Consider the following 135-residue polypeptide: Cilia- and flagella-associated protein 144 (135 aa).

Positions glutamine 76–isoleucine 100 are disordered.

Belongs to the CFAP144 family. In terms of assembly, microtubule inner protein component of sperm flagellar doublet microtubules. In terms of tissue distribution, predominantly expressed in tissues containing motile cilia.

It is found in the cytoplasm. Its subcellular location is the cytoskeleton. The protein resides in the cilium axoneme. The protein localises to the flagellum axoneme. The protein is Cilia- and flagella-associated protein 144 of Mus musculus (Mouse).